The sequence spans 343 residues: L-threonine 3-dehydrogenase (343 aa).

Cys-38 lines the Zn(2+) pocket. Catalysis depends on charge relay system residues Thr-40 and His-43. Zn(2+)-binding residues include His-63, Glu-64, Cys-93, Cys-96, Cys-99, and Cys-107. NAD(+)-binding positions include Ile-175, Asp-195, Arg-200, 262-264, and 286-287; these read LGL and IY.

It belongs to the zinc-containing alcohol dehydrogenase family. As to quaternary structure, homotetramer. It depends on Zn(2+) as a cofactor.

It is found in the cytoplasm. The enzyme catalyses L-threonine + NAD(+) = (2S)-2-amino-3-oxobutanoate + NADH + H(+). It participates in amino-acid degradation; L-threonine degradation via oxydo-reductase pathway; glycine from L-threonine: step 1/2. Catalyzes the NAD(+)-dependent oxidation of L-threonine to 2-amino-3-ketobutyrate. This is L-threonine 3-dehydrogenase from Saccharopolyspora erythraea (strain ATCC 11635 / DSM 40517 / JCM 4748 / NBRC 13426 / NCIMB 8594 / NRRL 2338).